The chain runs to 273 residues: Testis-specific serine/threonine-protein kinase 6 (273 aa).

Positions 12–267 (YKLGRTIGEG…AGQVARNCWL (256 aa)) constitute a Protein kinase domain. ATP contacts are provided by residues 18 to 26 (IGEGSYSKV) and lysine 41. Aspartate 135 functions as the Proton acceptor in the catalytic mechanism.

The protein belongs to the protein kinase superfamily. CAMK Ser/Thr protein kinase family. As to quaternary structure, microtubule inner protein component of sperm flagellar doublet microtubules. Interacts with HSP90; this interaction stabilizes and activates TSSK6. Interacts with the heat shock proteins HSPCB, HSPA8 and HSPA1A. These interactions appear to be required for TSSK6 kinase activity. Interacts with TSACC; this interaction is direct and recruits TSACC to HSP90, which is essential for kinase activity. The cofactor is Mg(2+). In terms of processing, autophosphorylated. Ubiquitinated; HSP90 activity negatively regulates ubiquitination and degradation. As to expression, highly expressed in testis. Expressed at lower levels in colon, small intestine, ovary, prostate, thymus, spleen and peripheral blood leukocytes.

It is found in the cytoplasm. The protein localises to the cytoskeleton. It localises to the flagellum axoneme. Its subcellular location is the nucleus. The catalysed reaction is L-seryl-[protein] + ATP = O-phospho-L-seryl-[protein] + ADP + H(+). It carries out the reaction L-threonyl-[protein] + ATP = O-phospho-L-threonyl-[protein] + ADP + H(+). Serine/threonine-protein kinase component of the sperm flagellar doublet microtubules. May act as a regulator of sperm motility by mediating phosphorylation of sperm doublet microtubule proteins. Plays a role in DNA condensation during postmeiotic chromatin remodeling and histone-to-protamine transition during spermatogenesis. This Homo sapiens (Human) protein is Testis-specific serine/threonine-protein kinase 6.